Here is a 253-residue protein sequence, read N- to C-terminus: Imidazole glycerol phosphate synthase subunit HisF (253 aa).

Active-site residues include aspartate 11 and aspartate 130.

Belongs to the HisA/HisF family. In terms of assembly, heterodimer of HisH and HisF.

The protein resides in the cytoplasm. It catalyses the reaction 5-[(5-phospho-1-deoxy-D-ribulos-1-ylimino)methylamino]-1-(5-phospho-beta-D-ribosyl)imidazole-4-carboxamide + L-glutamine = D-erythro-1-(imidazol-4-yl)glycerol 3-phosphate + 5-amino-1-(5-phospho-beta-D-ribosyl)imidazole-4-carboxamide + L-glutamate + H(+). Its pathway is amino-acid biosynthesis; L-histidine biosynthesis; L-histidine from 5-phospho-alpha-D-ribose 1-diphosphate: step 5/9. IGPS catalyzes the conversion of PRFAR and glutamine to IGP, AICAR and glutamate. The HisF subunit catalyzes the cyclization activity that produces IGP and AICAR from PRFAR using the ammonia provided by the HisH subunit. The chain is Imidazole glycerol phosphate synthase subunit HisF from Geobacter sulfurreducens (strain ATCC 51573 / DSM 12127 / PCA).